The following is a 516-amino-acid chain: 2-isopropylmalate synthase (516 aa).

Residues 5-267 form the Pyruvate carboxyltransferase domain; the sequence is IIIFDTTLRD…STDINIKEIH (263 aa). 4 residues coordinate Mn(2+): D14, H202, H204, and N238. The regulatory domain stretch occupies residues 393-516; the sequence is KLEYFDVQSK…VNKELERLQK (124 aa).

Belongs to the alpha-IPM synthase/homocitrate synthase family. LeuA type 1 subfamily. As to quaternary structure, homodimer. It depends on Mn(2+) as a cofactor.

The protein resides in the cytoplasm. The enzyme catalyses 3-methyl-2-oxobutanoate + acetyl-CoA + H2O = (2S)-2-isopropylmalate + CoA + H(+). The protein operates within amino-acid biosynthesis; L-leucine biosynthesis; L-leucine from 3-methyl-2-oxobutanoate: step 1/4. Catalyzes the condensation of the acetyl group of acetyl-CoA with 3-methyl-2-oxobutanoate (2-ketoisovalerate) to form 3-carboxy-3-hydroxy-4-methylpentanoate (2-isopropylmalate). In Buchnera aphidicola subsp. Cinara cedri (strain Cc), this protein is 2-isopropylmalate synthase.